Consider the following 1067-residue polypeptide: FHIP family protein GL19323 (1067 aa).

Over residues M1–Q11 the composition is skewed to polar residues. Disordered stretches follow at residues M1–R31, L503–Q525, and N832–A1013. Phosphoserine is present on residues S508 and S835. Positions Q842–Q858 are enriched in low complexity. The span at R859 to A878 shows a compositional bias: polar residues. Residues S893–S904 are compositionally biased toward low complexity. Over residues L918–Q949 the composition is skewed to polar residues. Residues S950–T979 are compositionally biased toward low complexity. A compositionally biased stretch (polar residues) spans Q980–L996.

It belongs to the FHIP family.

This is FHIP family protein GL19323 from Drosophila persimilis (Fruit fly).